Here is a 302-residue protein sequence, read N- to C-terminus: 1,2-dihydroxynaphthalene dioxygenase (302 aa).

2 consecutive VOC domains span residues 9 to 124 (ELGY…IFWG) and 149 to 270 (GLGH…PGWR). H152 is a binding site for Fe cation. Residues H152, 199-200 (DH), H215, and Y256 each bind substrate. H215 is a binding site for Fe cation. E266 is a Fe cation binding site.

This sequence belongs to the extradiol ring-cleavage dioxygenase family. Fe(2+) serves as cofactor.

It catalyses the reaction naphthalene-1,2-diol + O2 = 2-hydroxychromene-2-carboxylate + H(+). It functions in the pathway aromatic compound metabolism; naphthalene degradation. Its function is as follows. Involved in the naphthalene catabolic pathway. Catalyzes the meta-cleavage of 1,2-dihydroxynaphthalene (1,2-DHN) to yield 2-hydroxychromene-2-carboxylic acid. The protein is 1,2-dihydroxynaphthalene dioxygenase (nahC) of Pseudomonas putida (Arthrobacter siderocapsulatus).